The sequence spans 635 residues: MLNRIQTLMKTANNYETIEVLRNYLRLYIILARNEEGHGILIYDDNIDSIMSMMNITRLEVIGLTTHCTKLRSSPPIPMSRLFMDEIDHESYYSPKTSDYPLIDIIRKRSHEQGDIALALERYGIENTDSISEINEWLSSKGLACYRFVKFNDYRKQMYRKFPRCTIVDSMIIGHIGHHYIWIKNLETYTRPEIDVLPFDIKYISRDELWARISSSLDQTHIKTIAVSVYGAITDNGPMPYMISTYPGNTFVNFNSVKNLILNFLDWIKDIMTSTRTIILVGYMSNLFDIPLLTVYWPNNCGWKIYNNTLISSDGARVIWMDAYKFSCGLSLQDYCYHWGSKPESRPFDLIKKSDAKRNSKSLVKESMASLKSLYEAFETQSGASEVLMSPCRTFSFSRTEDTFSTSVINRVFENTGTGTYHPINDIPSLFIESSICLDHIIVNNQESNKYRIKSVLDIISSKQYPARRPNYVKNGTKGKLYIALCKVTVPTNDHIPVVYHDDDNTTTFITVLTSVDIETAIRVGYSIVELGALQWDNNIPELKNGLLDSIKMIYDLNAVTTNNLLEQLIENINFNNSSIISLFYTFAISYCRAFIYSIMETIDPVYISQFSYKELYVSSSYKDINESMSQMVKL.

Belongs to the orthopoxvirus OPG056 family. Interacts with protein OPG164. Interacts with protein OPG064.

The protein localises to the virion membrane. It is found in the host endosome. Its function is as follows. Plays a role in intracellular enveloped virus (IEV) transport to the cell surface through microtubule transport. Together with protein OPG064, forms a complex that interacts with host KLC2 (kinesin light chain isoform 2) to engage the kinesin-1 complex and thereby promote IEV trafficking. The sequence is that of Protein OPG056 (OPG056) from Homo sapiens (Human).